A 125-amino-acid chain; its full sequence is Small ribosomal subunit protein uS13 (125 aa).

The protein belongs to the universal ribosomal protein uS13 family. In terms of assembly, part of the 30S ribosomal subunit. Forms a loose heterodimer with protein S19. Forms two bridges to the 50S subunit in the 70S ribosome.

In terms of biological role, located at the top of the head of the 30S subunit, it contacts several helices of the 16S rRNA. In the 70S ribosome it contacts the 23S rRNA (bridge B1a) and protein L5 of the 50S subunit (bridge B1b), connecting the 2 subunits; these bridges are implicated in subunit movement. Contacts the tRNAs in the A and P-sites. The protein is Small ribosomal subunit protein uS13 of Orientia tsutsugamushi (strain Ikeda) (Rickettsia tsutsugamushi).